The chain runs to 226 residues: Fibrillarin-like rRNA/tRNA 2'-O-methyltransferase (226 aa).

S-adenosyl-L-methionine contacts are provided by residues 85 to 86, 104 to 105, 129 to 130, and 149 to 152; these read TT, EF, DA, and DVAQ.

This sequence belongs to the methyltransferase superfamily. Fibrillarin family. Interacts with nop5. Component of box C/D small ribonucleoprotein (sRNP) particles that contain rpl7ae, FlpA and nop5, plus a guide RNA.

Its function is as follows. Involved in pre-rRNA and tRNA processing. Utilizes the methyl donor S-adenosyl-L-methionine to catalyze the site-specific 2'-hydroxyl methylation of ribose moieties in rRNA and tRNA. Site specificity is provided by a guide RNA that base pairs with the substrate. Methylation occurs at a characteristic distance from the sequence involved in base pairing with the guide RNA. The sequence is that of Fibrillarin-like rRNA/tRNA 2'-O-methyltransferase from Thermococcus onnurineus (strain NA1).